The following is a 179-amino-acid chain: Inner membrane-spanning protein YciB (179 aa).

A run of 5 helical transmembrane segments spans residues I22–V42, M50–N70, W76–M96, L121–L141, and F149–I169.

The protein belongs to the YciB family.

The protein localises to the cell inner membrane. Plays a role in cell envelope biogenesis, maintenance of cell envelope integrity and membrane homeostasis. This chain is Inner membrane-spanning protein YciB, found in Salmonella dublin (strain CT_02021853).